The chain runs to 399 residues: Succinate--CoA ligase [ADP-forming] subunit beta (399 aa).

The ATP-grasp domain maps to 9–254 (KAVLAEFGVA…ESEEDPKEIE (246 aa)). ATP is bound by residues Lys46, 53–55 (GRG), Glu109, Ala112, and Glu117. Asn209 and Asp223 together coordinate Mg(2+). Substrate contacts are provided by residues Asn274 and 331 to 333 (GIM).

The protein belongs to the succinate/malate CoA ligase beta subunit family. In terms of assembly, heterotetramer of two alpha and two beta subunits. Requires Mg(2+) as cofactor.

It catalyses the reaction succinate + ATP + CoA = succinyl-CoA + ADP + phosphate. The catalysed reaction is GTP + succinate + CoA = succinyl-CoA + GDP + phosphate. It participates in carbohydrate metabolism; tricarboxylic acid cycle; succinate from succinyl-CoA (ligase route): step 1/1. Succinyl-CoA synthetase functions in the citric acid cycle (TCA), coupling the hydrolysis of succinyl-CoA to the synthesis of either ATP or GTP and thus represents the only step of substrate-level phosphorylation in the TCA. The beta subunit provides nucleotide specificity of the enzyme and binds the substrate succinate, while the binding sites for coenzyme A and phosphate are found in the alpha subunit. The sequence is that of Succinate--CoA ligase [ADP-forming] subunit beta from Phenylobacterium zucineum (strain HLK1).